Consider the following 229-residue polypeptide: Prolactin (229 aa).

The first 30 residues, 1–30, serve as a signal peptide directing secretion; it reads MDNKGWSLKGSLLPLLLLVSDLLLCQGVTS. An intrachain disulfide couples cysteine 34 to cysteine 41. Phosphoserine is present on residues serine 56, serine 64, and serine 120. Intrachain disulfides connect cysteine 88-cysteine 204 and cysteine 221-cysteine 229.

It belongs to the somatotropin/prolactin family. In terms of assembly, interacts with PRLR.

It localises to the secreted. Prolactin acts primarily on the mammary gland by promoting lactation. This chain is Prolactin (PRL), found in Neovison vison (American mink).